A 227-amino-acid chain; its full sequence is Venom allergen 5.01 (227 aa).

An N-terminal signal peptide occupies residues 1–23; sequence MEIGGLVYLILIITIINLSFGET. Intrachain disulfides connect cysteine 27–cysteine 39, cysteine 31–cysteine 124, cysteine 49–cysteine 117, and cysteine 193–cysteine 210. In terms of domain architecture, SCP spans 68-212; the sequence is LKRHNDFRQN…WYTHYLVCNY (145 aa).

It belongs to the CRISP family. Venom allergen 5-like subfamily. Expressed by the venom gland.

Its subcellular location is the secreted. This chain is Venom allergen 5.01, found in Dolichovespula maculata (Bald-faced hornet).